Here is a 126-residue protein sequence, read N- to C-terminus: Holo-[acyl-carrier-protein] synthase (126 aa).

Mg(2+) contacts are provided by Asp-9 and Glu-58.

Belongs to the P-Pant transferase superfamily. AcpS family. Requires Mg(2+) as cofactor.

The protein localises to the cytoplasm. It catalyses the reaction apo-[ACP] + CoA = holo-[ACP] + adenosine 3',5'-bisphosphate + H(+). Its function is as follows. Transfers the 4'-phosphopantetheine moiety from coenzyme A to a Ser of acyl-carrier-protein. The polypeptide is Holo-[acyl-carrier-protein] synthase (Salmonella newport (strain SL254)).